The chain runs to 2298 residues: Protein Ycf2 (2298 aa).

1640–1647 (GSIGTGRS) is an ATP binding site.

It belongs to the Ycf2 family.

Its subcellular location is the plastid. The protein localises to the chloroplast stroma. Its function is as follows. Probable ATPase of unknown function. Its presence in a non-photosynthetic plant (Epifagus virginiana) and experiments in tobacco indicate that it has an essential function which is probably not related to photosynthesis. The sequence is that of Protein Ycf2 from Carica papaya (Papaya).